The primary structure comprises 107 residues: Nucleoid-associated protein XF_1808 (107 aa).

Belongs to the YbaB/EbfC family. As to quaternary structure, homodimer.

The protein resides in the cytoplasm. It is found in the nucleoid. Functionally, binds to DNA and alters its conformation. May be involved in regulation of gene expression, nucleoid organization and DNA protection. This chain is Nucleoid-associated protein XF_1808, found in Xylella fastidiosa (strain 9a5c).